We begin with the raw amino-acid sequence, 114 residues long: QDAAKGEAVFKQCMTCHRADKNMVGPALGGVVGRKAGTAAGFTYSPLNHNSGEAGLVWTQENIIAYLPDPNAYLKKFLTDKGQADKATGSTKMTFKLANDQQRKDVAAYLATLK.

Residue glutamine 1 is modified to Pyrrolidone carboxylic acid. Heme c contacts are provided by cysteine 13, cysteine 16, histidine 17, and methionine 93.

This sequence belongs to the cytochrome c family. In terms of processing, binds 1 heme c group covalently per subunit.

Its function is as follows. Cytochrome c2 is found mainly in purple, non-sulfur, photosynthetic bacteria where it functions as the electron donor to the oxidized bacteriochlorophyll in the photophosphorylation pathway. However, it may also have a role in the respiratory chain and is found in some non-photosynthetic bacteria. The protein is Cytochrome c2 (cycA) of Rhodopseudomonas palustris.